The primary structure comprises 140 residues: Putative septation protein SpoVG (140 aa).

A disordered region spans residues 88-127; the sequence is VAPQAGGLQGAEEPTAVEPAPQLQDESELPWEPGDDGEGA. Residues 112–124 show a composition bias toward acidic residues; that stretch reads DESELPWEPGDDG.

Belongs to the SpoVG family.

In terms of biological role, could be involved in septation. The chain is Putative septation protein SpoVG from Symbiobacterium thermophilum (strain DSM 24528 / JCM 14929 / IAM 14863 / T).